The chain runs to 141 residues: Galactose-6-phosphate isomerase subunit LacA (141 aa).

Belongs to the LacAB/RpiB family. Heteromultimeric protein consisting of LacA and LacB.

The enzyme catalyses aldehydo-D-galactose 6-phosphate = keto-D-tagatose 6-phosphate. It functions in the pathway carbohydrate metabolism; D-galactose 6-phosphate degradation; D-tagatose 6-phosphate from D-galactose 6-phosphate: step 1/1. The sequence is that of Galactose-6-phosphate isomerase subunit LacA from Streptococcus equi subsp. zooepidemicus (strain MGCS10565).